A 580-amino-acid chain; its full sequence is Mucolipin-1 (580 aa).

The tract at residues 1–38 (MTAPAGPRGSETERLLTPNPGYGTQAGPSPAPPTPPEE) is disordered. Residues 1-65 (MTAPAGPRGS…FRAKGRKPCK (65 aa)) are Cytoplasmic-facing. Ser-10 is subject to Phosphoserine. The Dileucine motif; mediates targeting to lysosomes signature appears at 11-16 (ETERLL). Residues 42-62 (RRRLKYFFMSPCDKFRAKGRK) are interaction with phosphoinositides. The chain crosses the membrane as a helical span at residues 66 to 86 (LMLQVVKILVVTVQLILFGLS). At 87 to 298 (NQLAVTFREE…VFQHGDNSFR (212 aa)) the chain is on the extracellular side. The interval 107-121 (LGYSDGADDTFAAYT) is extracellular/lumenal pore loop. A disulfide bond links Cys-166 and Cys-192. Asn-230 carries an N-linked (GlcNAc...) asparagine glycan. A disulfide bridge connects residues Cys-253 and Cys-284. Residues 299-321 (LLFDVVVILTCSLSFLLCARSLL) traverse the membrane as a helical segment. The Cytoplasmic segment spans residues 322 to 350 (RGFLLQNEFVGFMWRQRGRVISLWERLEF). The chain crosses the membrane as a helical span at residues 351–371 (VNGWYILLVTSDVLTISGTIM). Residues 372–382 (KIGIEAKNLAS) are Extracellular-facing. Residues 383 to 405 (YDVCSILLGTSTLLVWVGVIRYL) form a helical membrane-spanning segment. Topologically, residues 406-427 (TFFHNYNILIATLRVALPSVMR) are cytoplasmic. A helical transmembrane segment spans residues 428–448 (FCCCVAVIYLGYCFCGWIVLG). The Extracellular segment spans residues 449–456 (PYHVKFRS). The pore-forming intramembrane region spans 457–477 (LSMVSECLFSLINGDDMFVTF). The Selectivity filter signature appears at 469-474 (NGDDMF). Topologically, residues 478 to 491 (AAMQAQQGRSSLVW) are extracellular. Residues 492–513 (LFSQLYLYSFISLFIYMVLSLF) traverse the membrane as a helical segment. At 514-580 (IALITGAYDT…PSEEHSLLVN (67 aa)) the chain is on the cytoplasmic side. Phosphoserine; by PAK occurs at positions 557 and 559. The required for palmitoylation and association with membranes stretch occupies residues 565-567 (CCC). A Dileucine internalization motif; mediates AP2 complex-dependent internalization motif is present at residues 573-578 (EEHSLL).

This sequence belongs to the transient receptor (TC 1.A.4) family. Polycystin subfamily. MCOLN1 sub-subfamily. In terms of assembly, homotetramer. Homooligomer. Can heterooligomerize with MCOLN2 or MCOLN3; heteromeric assemblies have different channel properties as compared to the respective homooligomers and may be tissue-specific. Interacts with PDCD6. Interacts with TMEM163. Interacts with LAPTM4B. Palmitoylated; involved in association with membranes. In terms of processing, phosphorylation by PKA inhibits channel activity. Dephosphorylation increases activity. Post-translationally, proteolytically cleaved probably involving multiple lysosomal proteases including cathepsin B; inhibits lysosomal channel activity. Widely expressed in adult and fetal tissues.

The protein localises to the late endosome membrane. Its subcellular location is the lysosome membrane. It localises to the cytoplasmic vesicle membrane. The protein resides in the cell projection. It is found in the phagocytic cup. The protein localises to the cytoplasmic vesicle. Its subcellular location is the phagosome membrane. It localises to the cell membrane. The enzyme catalyses Ca(2+)(in) = Ca(2+)(out). It catalyses the reaction Fe(2+)(in) = Fe(2+)(out). The catalysed reaction is Mg(2+)(in) = Mg(2+)(out). It carries out the reaction K(+)(in) = K(+)(out). The enzyme catalyses Na(+)(in) = Na(+)(out). Channel activity is controlled by multiple regulatory mechanisms in different subcellular compartments. Channel function is transiently modulated by changes in Ca(2+) in a pH-dependent manner; pH changes modify the aggregation state of unitary channels; a negative cooperativity between extracellular/lumenal Ca(2+) and H(+) is suggested. Regulated by phosphoinositides in a compartment-specific manner: in lysosomes activated by PtdIns(3,5)P2 (Phosphatidylinositol 3,5-bisphosphate) and at the plasma membrane inhibited by PtdIns(4,5)P2 (Phosphatidylinositol 4,5-bisphosphate). Nonselective cation channel probably playing a role in the regulation of membrane trafficking events and of metal homeostasis. Acts as a Ca(2+)-permeable cation channel with inwardly rectifying activity. Proposed to play a major role in Ca(2+) release from late endosome and lysosome vesicles to the cytoplasm, which is important for many lysosome-dependent cellular events, including the fusion and trafficking of these organelles, exocytosis and autophagy. Required for efficient uptake of large particles in macrophages in which Ca(2+) release from the lysosomes triggers lysosomal exocytosis. May also play a role in phagosome-lysosome fusion. Involved in lactosylceramide trafficking indicative for a role in the regulation of late endocytic membrane fusion/fission events. By mediating lysosomal Ca(2+) release is involved in regulation of mTORC1 signaling and in mTOR/TFEB-dependent lysosomal adaptation to environmental cues such as nutrient levels. Seems to act as lysosomal active oxygen species (ROS) sensor involved in ROS-induced TFEB activation and autophagy. Also functions as a Fe(2+) permeable channel in late endosomes and lysosomes. Also permeable to Mg(2+), Na(+). K(+) and Cs(+). Proposed to play a role in zinc homeostasis probably implicating its association with TMEM163 In adaptive immunity, TRPML2 and TRPML1 may play redundant roles in the function of the specialized lysosomes of B cells. In terms of biological role, may contribute to cellular lipase activity within the late endosomal pathway or at the cell surface which may be involved in processes of membrane reshaping and vesiculation, especially the growth of tubular structures. However, it is not known, whether it conveys the enzymatic activity directly, or merely facilitates the activity of an associated phospholipase. This Homo sapiens (Human) protein is Mucolipin-1.